A 451-amino-acid polypeptide reads, in one-letter code: UPF0210 protein LMOf2365_0563 (451 aa).

Belongs to the UPF0210 family. As to quaternary structure, homodimer.

The polypeptide is UPF0210 protein LMOf2365_0563 (Listeria monocytogenes serotype 4b (strain F2365)).